The sequence spans 110 residues: MSLSEARFHDLVDATQQAVEDIFDDSGLDVDLENSAGVLTVRFDNGSQLIFSRQEPIRQLWLAARSGGYHFDYDEAEGRWICDSSDEQLGEMLVRITLEQSGAELEFDEL.

The protein belongs to the frataxin family.

Its function is as follows. Involved in iron-sulfur (Fe-S) cluster assembly. May act as a regulator of Fe-S biogenesis. The protein is Iron-sulfur cluster assembly protein CyaY of Ectopseudomonas mendocina (strain ymp) (Pseudomonas mendocina).